Here is a 625-residue protein sequence, read N- to C-terminus: Vacuolar-sorting receptor 2 (625 aa).

The first 19 residues, 1–19 (MRTTNVWLVVIVWVTVGWS), serve as a signal peptide directing secretion. The Lumenal portion of the chain corresponds to 20–567 (SCTGRFVVEK…INRDARGDFS (548 aa)). The region spanning 55–167 (QYGGSMSGAV…SLGSAIKTAI (113 aa)) is the PA domain. N-linked (GlcNAc...) asparagine glycans are attached at residues asparagine 147, asparagine 293, and asparagine 433. EGF-like domains are found at residues 415–465 (ETNE…THCE) and 468–515 (GALR…KECK). 7 disulfides stabilise this stretch: cysteine 419-cysteine 437, cysteine 426-cysteine 446, cysteine 448-cysteine 464, cysteine 472-cysteine 492, cysteine 479-cysteine 500, cysteine 502-cysteine 514, and cysteine 544-cysteine 557. Positions 516–558 (DVNECEEKTACQCRDCKCKNTWGSYECSCSGSLLYIREHDICI) constitute an EGF-like 3; calcium-binding domain. The helical transmembrane segment at 568-588 (WGVIWIIIMGLGAAALGAYTV) threads the bilayer. Residues 589–625 (YKYRIRTYMDSEIRAIMAQYMPLDNNPNTQLSSQLEL) lie on the Cytoplasmic side of the membrane. A Tyrosine-based internalization motif motif is present at residues 608 to 611 (YMPL).

It belongs to the VSR (BP-80) family. In terms of tissue distribution, expressed only in flowers.

The protein localises to the membrane. The protein resides in the golgi apparatus membrane. It is found in the cytoplasmic vesicle. Its subcellular location is the clathrin-coated vesicle membrane. It localises to the prevacuolar compartment membrane. Its function is as follows. Vacuolar-sorting receptor (VSR) involved in clathrin-coated vesicles sorting from Golgi apparatus to vacuoles. This is Vacuolar-sorting receptor 2 from Arabidopsis thaliana (Mouse-ear cress).